A 175-amino-acid polypeptide reads, in one-letter code: Type II restriction enzyme NgoBV (175 aa).

The catalysed reaction is Endonucleolytic cleavage of DNA to give specific double-stranded fragments with terminal 5'-phosphates.. Functionally, a P subtype restriction enzyme that recognizes the double-stranded sequence 5'-GGNNCC-3'; the cleavage site is unknown. This Neisseria gonorrhoeae protein is Type II restriction enzyme NgoBV (ngoBVR).